The primary structure comprises 57 residues: Large ribosomal subunit protein bL32c (57 aa).

Belongs to the bacterial ribosomal protein bL32 family.

It localises to the plastid. Its subcellular location is the chloroplast. The protein is Large ribosomal subunit protein bL32c of Phalaenopsis aphrodite subsp. formosana (Moth orchid).